Consider the following 308-residue polypeptide: Glutathione synthetase (308 aa).

Residues 117-300 (KLLPLSFPKF…LERDCWDYFE (184 aa)) enclose the ATP-grasp domain. ATP is bound at residue 143 to 198 (YAEYGDIVLKPLYDYGGNGVCRICGRADVGAISSAMVERYEAPLVAQQFIDDISSD). Residues glutamate 271 and asparagine 273 each contribute to the Mg(2+) site.

It belongs to the prokaryotic GSH synthase family. The cofactor is Mg(2+). It depends on Mn(2+) as a cofactor.

It catalyses the reaction gamma-L-glutamyl-L-cysteine + glycine + ATP = glutathione + ADP + phosphate + H(+). It participates in sulfur metabolism; glutathione biosynthesis; glutathione from L-cysteine and L-glutamate: step 2/2. In Anaplasma centrale, this protein is Glutathione synthetase.